The sequence spans 142 residues: AP-2 complex subunit sigma (142 aa).

It belongs to the adaptor complexes small subunit family. As to quaternary structure, adaptor protein complex 2 (AP-2) is a heterotetramer composed of two large adaptins (alpha-type and beta-type subunits), a medium adaptin (mu-type subunit) and a small adaptin (sigma-type subunit).

It localises to the cell membrane. Its subcellular location is the membrane. The protein localises to the coated pit. In terms of biological role, subunit of the adaptor protein complex 2 (AP-2). Adaptor protein complexes function in protein transport via transport vesicles in different membrane traffic pathways. Adaptor protein complexes are vesicle coat components and appear to be involved in cargo selection and vesicle formation. AP-2 is involved in clathrin-dependent endocytosis in which cargo proteins are incorporated into vesicles surrounded by clathrin (clathrin-coated vesicles, CCVs) which are destined for fusion with the early endosome. The complex binds polyphosphoinositides. This is AP-2 complex subunit sigma (AP17) from Arabidopsis thaliana (Mouse-ear cress).